The primary structure comprises 106 residues: Large ribosomal subunit protein P1 (106 aa).

The tract at residues alanine 69–glycine 106 is disordered. Positions lysine 83–isoleucine 98 are enriched in acidic residues.

This sequence belongs to the eukaryotic ribosomal protein P1/P2 family. As to quaternary structure, part of the 50S ribosomal subunit. Homodimer, it forms part of the ribosomal stalk which helps the ribosome interact with GTP-bound translation factors. Forms a heptameric uL10/P0(P1)2(P1)2(P1)2 complex, where uL10/P0 forms an elongated spine to which the P1 dimers bind in a sequential fashion.

Its function is as follows. Forms part of the ribosomal stalk, playing a central role in the interaction of the ribosome with GTP-bound translation factors. This Archaeoglobus fulgidus (strain ATCC 49558 / DSM 4304 / JCM 9628 / NBRC 100126 / VC-16) protein is Large ribosomal subunit protein P1.